The following is a 234-amino-acid chain: (5-formylfuran-3-yl)methyl phosphate synthase (234 aa).

Residue Lys-27 is the Schiff-base intermediate with substrate of the active site. Residue Lys-85 is the Proton acceptor of the active site.

It belongs to the MfnB family.

The enzyme catalyses 2 D-glyceraldehyde 3-phosphate = 4-(hydroxymethyl)-2-furancarboxaldehyde phosphate + phosphate + 2 H2O. It participates in cofactor biosynthesis; methanofuran biosynthesis. Functionally, catalyzes the formation of 4-(hydroxymethyl)-2-furancarboxaldehyde phosphate (4-HFC-P) from two molecules of glyceraldehyde-3-P (GA-3-P). The polypeptide is (5-formylfuran-3-yl)methyl phosphate synthase (Methanosarcina mazei (strain ATCC BAA-159 / DSM 3647 / Goe1 / Go1 / JCM 11833 / OCM 88) (Methanosarcina frisia)).